The chain runs to 187 residues: Thioredoxin F, chloroplastic (187 aa).

A chloroplast-targeting transit peptide spans 1–72 (MALRLSVSSS…GSDTATVGAE (72 aa)). The Thioredoxin domain occupies 73 to 186 (AEAVAVTGQV…LIQAIETVKS (114 aa)). Active-site nucleophile residues include cysteine 111 and cysteine 114. The cysteines at positions 111 and 114 are disulfide-linked.

It belongs to the thioredoxin family. Plant F-type subfamily.

Its subcellular location is the plastid. It localises to the chloroplast. In terms of biological role, thiol-disulfide oxidoreductase involved in the redox regulation of enzymes of both reductive pentose phosphate pathway (Calvin-Benson cycle) and oxidative pentose phosphate pathway. The polypeptide is Thioredoxin F, chloroplastic (Oryza sativa subsp. japonica (Rice)).